A 388-amino-acid polypeptide reads, in one-letter code: Succinate--CoA ligase [ADP-forming] subunit beta (388 aa).

An ATP-grasp domain is found at 9–244 (KEILRKYNVP…LDEEDPAEIE (236 aa)). Residues Lys-46, 53-55 (GRG), Glu-99, Ala-102, and Glu-107 each bind ATP. 2 residues coordinate Mg(2+): Asn-199 and Asp-213. Residues Asn-264 and 321–323 (GIM) each bind substrate.

The protein belongs to the succinate/malate CoA ligase beta subunit family. In terms of assembly, heterotetramer of two alpha and two beta subunits. Mg(2+) is required as a cofactor.

It carries out the reaction succinate + ATP + CoA = succinyl-CoA + ADP + phosphate. It catalyses the reaction GTP + succinate + CoA = succinyl-CoA + GDP + phosphate. The protein operates within carbohydrate metabolism; tricarboxylic acid cycle; succinate from succinyl-CoA (ligase route): step 1/1. Functionally, succinyl-CoA synthetase functions in the citric acid cycle (TCA), coupling the hydrolysis of succinyl-CoA to the synthesis of either ATP or GTP and thus represents the only step of substrate-level phosphorylation in the TCA. The beta subunit provides nucleotide specificity of the enzyme and binds the substrate succinate, while the binding sites for coenzyme A and phosphate are found in the alpha subunit. The sequence is that of Succinate--CoA ligase [ADP-forming] subunit beta from Ralstonia pickettii (strain 12J).